Here is a 443-residue protein sequence, read N- to C-terminus: Histone deacetylase 10, chloroplastic (443 aa).

The N-terminal 65 residues, 1–65 (MEQLWVPSLP…PSHNGTSISD (65 aa)), are a transit peptide targeting the chloroplast. Residues 82 to 412 (DAHILYCTSP…FRAFLGEPSL (331 aa)) are histone deacetylase. The active-site Proton donor/acceptor is histidine 222. Residues aspartate 259, histidine 261, and aspartate 346 each contribute to the Zn(2+) site.

This sequence belongs to the histone deacetylase family. It depends on Zn(2+) as a cofactor. As to expression, expressed in leaves. Expressed in coleoptiles, leaves, flag leaves and flowers. Expressed at low levels in roots.

It is found in the plastid. The protein localises to the chloroplast. The protein resides in the mitochondrion. The catalysed reaction is N-acetylserotonin + H2O = serotonin + acetate. The enzyme catalyses N-acetyltyramine + H2O = tyramine + acetate. It carries out the reaction N-acetyltryptamine + H2O = tryptamine + acetate. It catalyses the reaction melatonin + H2O = 5-methoxytryptamine + acetate. The activity of this enzyme is not inhibited by butyrate, a well-known histone deacetylase inhibitor. Functionally, involved in the regulation of melatonin biosynthesis by catalyzing the deacetylation of N-acetylserotonin to produce serotonin. N-acetylserotonin is methylated by acetylserotonin O-methyltransferase (ASMT) to produce melatonin (N-acetyl-5-methoxytryptamine). Deacetylates melatonin to produce 5-methoxytryptamine. In vitro, deacetylates N-acetyltyramine and N-acetyltryptamine to produce tyramine and tryptamine, respectively. The chain is Histone deacetylase 10, chloroplastic from Oryza sativa subsp. japonica (Rice).